A 178-amino-acid chain; its full sequence is Probetacellulin (178 aa).

Residues 1-31 (MDRAARCSGASSLPLLLALALGLVILHCVVA) form the signal peptide. The Extracellular portion of the chain corresponds to 32–118 (DGNSTRSPET…LFYLRGDRGQ (87 aa)). N34 is a glycosylation site (N-linked (GlcNAc...) asparagine). The EGF-like domain maps to 65–105 (HFSRCPKQYKHYCIKGRCRFVVAEQTPSCVCDEGYIGARCE). Disulfide bonds link C69-C82, C77-C93, and C95-C104. The propeptide at 112–178 (LRGDRGQILV…NEDIEETNIA (67 aa)) is removed in mature form. Residues 119–139 (ILVICLIAVMVVFIILVIGVC) traverse the membrane as a helical segment. Residues 140–178 (TCCHPLRKRRKRKKKEEEMETLGKDITPINEDIEETNIA) lie on the Cytoplasmic side of the membrane.

In terms of assembly, monomer. Interacts with EGFR and ERBB4. In terms of tissue distribution, synthesized in several tissues and tumor cells. Predominantly expressed in pancreas and small intestine.

It localises to the secreted. Its subcellular location is the extracellular space. The protein localises to the cell membrane. Growth factor that binds to EGFR, ERBB4 and other EGF receptor family members. Potent mitogen for retinal pigment epithelial cells and vascular smooth muscle cells. The sequence is that of Probetacellulin (BTC) from Homo sapiens (Human).